The following is a 372-amino-acid chain: Cytochrome b (372 aa).

4 consecutive transmembrane segments (helical) span residues 25–45 (FGSM…FLAI), 69–90 (WIMQ…YIHI), 105–125 (WLSG…GYVL), and 170–190 (FFAL…IHII). Heme b is bound by residues His-75 and His-89. 2 residues coordinate heme b: His-174 and His-188. His-193 serves as a coordination point for a ubiquinone. 4 helical membrane passes run 218–238 (YKDM…LSFL), 280–300 (LGGT…PFTH), 312–332 (LSQT…WTAT), and 339–358 (FITI…IMTP).

Belongs to the cytochrome b family. The cytochrome bc1 complex contains 3 respiratory subunits (MT-CYB, CYC1 and UQCRFS1), 2 core proteins (UQCRC1 and UQCRC2) and probably 6 low-molecular weight proteins. Heme b is required as a cofactor.

The protein resides in the mitochondrion inner membrane. Its function is as follows. Component of the ubiquinol-cytochrome c reductase complex (complex III or cytochrome b-c1 complex) that is part of the mitochondrial respiratory chain. The b-c1 complex mediates electron transfer from ubiquinol to cytochrome c. Contributes to the generation of a proton gradient across the mitochondrial membrane that is then used for ATP synthesis. The chain is Cytochrome b (MT-CYB) from Aspidelaps scutatus (Shield-nose snake).